The following is a 334-amino-acid chain: Protein-methionine-sulfoxide reductase catalytic subunit MsrP (334 aa).

The tat-type signal signal peptide spans 1–44 (MKKNQFLKESDVTAESVFFMKRRQVLKALGISAAALSLPHAAHA). Mo-molybdopterin-binding positions include asparagine 88, 91 to 92 (YE), cysteine 146, threonine 181, asparagine 233, arginine 238, and 249 to 251 (GIK).

The protein belongs to the MsrP family. Heterodimer of a catalytic subunit (MsrP) and a heme-binding subunit (MsrQ). The cofactor is Mo-molybdopterin. Post-translationally, predicted to be exported by the Tat system. The position of the signal peptide cleavage has not been experimentally proven.

The protein resides in the periplasm. The catalysed reaction is L-methionyl-[protein] + a quinone + H2O = L-methionyl-(S)-S-oxide-[protein] + a quinol. The enzyme catalyses L-methionyl-[protein] + a quinone + H2O = L-methionyl-(R)-S-oxide-[protein] + a quinol. Functionally, part of the MsrPQ system that repairs oxidized periplasmic proteins containing methionine sulfoxide residues (Met-O), using respiratory chain electrons. Thus protects these proteins from oxidative-stress damage caused by reactive species of oxygen and chlorine generated by the host defense mechanisms. MsrPQ is essential for the maintenance of envelope integrity under bleach stress, rescuing a wide series of structurally unrelated periplasmic proteins from methionine oxidation, including the primary periplasmic chaperone SurA and the lipoprotein Pal. The catalytic subunit MsrP is non-stereospecific, being able to reduce both (R-) and (S-) diastereoisomers of methionine sulfoxide. The sequence is that of Protein-methionine-sulfoxide reductase catalytic subunit MsrP from Escherichia coli O17:K52:H18 (strain UMN026 / ExPEC).